The sequence spans 470 residues: 3-isopropylmalate dehydratase large subunit (470 aa).

[4Fe-4S] cluster-binding residues include Cys346, Cys406, and Cys409.

The protein belongs to the aconitase/IPM isomerase family. LeuC type 1 subfamily. As to quaternary structure, heterodimer of LeuC and LeuD. The cofactor is [4Fe-4S] cluster.

The catalysed reaction is (2R,3S)-3-isopropylmalate = (2S)-2-isopropylmalate. It participates in amino-acid biosynthesis; L-leucine biosynthesis; L-leucine from 3-methyl-2-oxobutanoate: step 2/4. Catalyzes the isomerization between 2-isopropylmalate and 3-isopropylmalate, via the formation of 2-isopropylmaleate. The protein is 3-isopropylmalate dehydratase large subunit of Shouchella clausii (strain KSM-K16) (Alkalihalobacillus clausii).